The chain runs to 417 residues: Serine hydroxymethyltransferase (417 aa).

Residues L121 and 125–127 (GHL) each bind (6S)-5,6,7,8-tetrahydrofolate. Residue K229 is modified to N6-(pyridoxal phosphate)lysine. 355–357 (SPF) is a (6S)-5,6,7,8-tetrahydrofolate binding site.

It belongs to the SHMT family. In terms of assembly, homodimer. The cofactor is pyridoxal 5'-phosphate.

Its subcellular location is the cytoplasm. It catalyses the reaction (6R)-5,10-methylene-5,6,7,8-tetrahydrofolate + glycine + H2O = (6S)-5,6,7,8-tetrahydrofolate + L-serine. It participates in one-carbon metabolism; tetrahydrofolate interconversion. It functions in the pathway amino-acid biosynthesis; glycine biosynthesis; glycine from L-serine: step 1/1. In terms of biological role, catalyzes the reversible interconversion of serine and glycine with tetrahydrofolate (THF) serving as the one-carbon carrier. This reaction serves as the major source of one-carbon groups required for the biosynthesis of purines, thymidylate, methionine, and other important biomolecules. Also exhibits THF-independent aldolase activity toward beta-hydroxyamino acids, producing glycine and aldehydes, via a retro-aldol mechanism. This is Serine hydroxymethyltransferase from Buchnera aphidicola subsp. Acyrthosiphon pisum (strain APS) (Acyrthosiphon pisum symbiotic bacterium).